The following is a 449-amino-acid chain: Phosphoglucosamine mutase (449 aa).

S104 serves as the catalytic Phosphoserine intermediate. Residues S104, D243, D245, and D247 each coordinate Mg(2+). Position 104 is a phosphoserine (S104).

This sequence belongs to the phosphohexose mutase family. Requires Mg(2+) as cofactor. Activated by phosphorylation.

The catalysed reaction is alpha-D-glucosamine 1-phosphate = D-glucosamine 6-phosphate. Catalyzes the conversion of glucosamine-6-phosphate to glucosamine-1-phosphate. In Xanthomonas campestris pv. campestris (strain 8004), this protein is Phosphoglucosamine mutase.